The primary structure comprises 181 residues: uncharacterized protein (181 aa).

This sequence to M.pneumoniae MPN_635 C-terminal region.

This is an uncharacterized protein from Mycoplasma pneumoniae (strain ATCC 29342 / M129 / Subtype 1) (Mycoplasmoides pneumoniae).